We begin with the raw amino-acid sequence, 334 residues long: Holliday junction branch migration complex subunit RuvB (334 aa).

Residues 4 to 184 (ADRLIQPQLQ…FGIPLRLEFY (181 aa)) are large ATPase domain (RuvB-L). ATP-binding positions include R24, G65, K68, T69, T70, 131-133 (EDY), R174, Y184, and R221. A Mg(2+)-binding site is contributed by T69. The interval 185–255 (NIKDLSTIVT…VADHALDLLD (71 aa)) is small ATPAse domain (RuvB-S). The tract at residues 258–334 (NEGFDYMDRK…YQHFQLIKPE (77 aa)) is head domain (RuvB-H). DNA contacts are provided by R294, R313, and R318.

The protein belongs to the RuvB family. Homohexamer. Forms an RuvA(8)-RuvB(12)-Holliday junction (HJ) complex. HJ DNA is sandwiched between 2 RuvA tetramers; dsDNA enters through RuvA and exits via RuvB. An RuvB hexamer assembles on each DNA strand where it exits the tetramer. Each RuvB hexamer is contacted by two RuvA subunits (via domain III) on 2 adjacent RuvB subunits; this complex drives branch migration. In the full resolvosome a probable DNA-RuvA(4)-RuvB(12)-RuvC(2) complex forms which resolves the HJ.

The protein resides in the cytoplasm. It carries out the reaction ATP + H2O = ADP + phosphate + H(+). In terms of biological role, the RuvA-RuvB-RuvC complex processes Holliday junction (HJ) DNA during genetic recombination and DNA repair, while the RuvA-RuvB complex plays an important role in the rescue of blocked DNA replication forks via replication fork reversal (RFR). RuvA specifically binds to HJ cruciform DNA, conferring on it an open structure. The RuvB hexamer acts as an ATP-dependent pump, pulling dsDNA into and through the RuvAB complex. RuvB forms 2 homohexamers on either side of HJ DNA bound by 1 or 2 RuvA tetramers; 4 subunits per hexamer contact DNA at a time. Coordinated motions by a converter formed by DNA-disengaged RuvB subunits stimulates ATP hydrolysis and nucleotide exchange. Immobilization of the converter enables RuvB to convert the ATP-contained energy into a lever motion, pulling 2 nucleotides of DNA out of the RuvA tetramer per ATP hydrolyzed, thus driving DNA branch migration. The RuvB motors rotate together with the DNA substrate, which together with the progressing nucleotide cycle form the mechanistic basis for DNA recombination by continuous HJ branch migration. Branch migration allows RuvC to scan DNA until it finds its consensus sequence, where it cleaves and resolves cruciform DNA. The protein is Holliday junction branch migration complex subunit RuvB of Shewanella putrefaciens (strain CN-32 / ATCC BAA-453).